The primary structure comprises 451 residues: ACT domain-containing protein ACR4 (451 aa).

4 ACT domains span residues 35-118 (VIRV…VIPS), 123-200 (VIEL…NTPR), 259-335 (VVTV…VSEG), and 337-416 (KLEL…QEQQ). Residues 409 to 428 (KNNPQEQQQRQKSPSHESPT) are disordered. Polar residues predominate over residues 410–420 (NNPQEQQQRQK).

As to expression, highly expressed in flowers and at lower levels in leaves and siliques.

Functionally, may bind amino acids. The chain is ACT domain-containing protein ACR4 from Arabidopsis thaliana (Mouse-ear cress).